The following is a 364-amino-acid chain: tRNA 2-selenouridine synthase (364 aa).

One can recognise a Rhodanese domain in the interval 14–137; the sequence is LLADTPLIDV…LRQTAIQATW (124 aa). C97 serves as the catalytic S-selanylcysteine intermediate.

Belongs to the SelU family. Monomer.

The catalysed reaction is 5-methylaminomethyl-2-thiouridine(34) in tRNA + selenophosphate + (2E)-geranyl diphosphate + H2O + H(+) = 5-methylaminomethyl-2-selenouridine(34) in tRNA + (2E)-thiogeraniol + phosphate + diphosphate. It carries out the reaction 5-methylaminomethyl-2-thiouridine(34) in tRNA + (2E)-geranyl diphosphate = 5-methylaminomethyl-S-(2E)-geranyl-thiouridine(34) in tRNA + diphosphate. It catalyses the reaction 5-methylaminomethyl-S-(2E)-geranyl-thiouridine(34) in tRNA + selenophosphate + H(+) = 5-methylaminomethyl-2-(Se-phospho)selenouridine(34) in tRNA + (2E)-thiogeraniol. The enzyme catalyses 5-methylaminomethyl-2-(Se-phospho)selenouridine(34) in tRNA + H2O = 5-methylaminomethyl-2-selenouridine(34) in tRNA + phosphate. Its function is as follows. Involved in the post-transcriptional modification of the uridine at the wobble position (U34) of tRNA(Lys), tRNA(Glu) and tRNA(Gln). Catalyzes the conversion of 2-thiouridine (S2U-RNA) to 2-selenouridine (Se2U-RNA). Acts in a two-step process involving geranylation of 2-thiouridine (S2U) to S-geranyl-2-thiouridine (geS2U) and subsequent selenation of the latter derivative to 2-selenouridine (Se2U) in the tRNA chain. The chain is tRNA 2-selenouridine synthase from Salmonella paratyphi B (strain ATCC BAA-1250 / SPB7).